The following is a 1218-amino-acid chain: NACHT, LRR and PYD domains-containing protein 1a allele 5 (1218 aa).

Over residues 1-29 (MGESQSKQESNTRVAQHGSQQDVDPTFQT) the composition is skewed to polar residues. Disordered stretches follow at residues 1 to 44 (MGES…QVEQ) and 71 to 91 (EMDH…DRSE). Basic residues predominate over residues 77–87 (RRHSHQSKKKL). In terms of domain architecture, NACHT spans 175 to 484 (QLVIIEGAAG…EFFAAMSYIL (310 aa)). 181 to 188 (GAAGIGKS) contacts ATP. LRR repeat units lie at residues 343 to 364 (KERN…LTLC), 673 to 693 (NLEE…RSLC), and 730 to 750 (RLAE…RQLC). The span at 799–815 (TMPTENTDGEESLTSSK) shows a compositional bias: polar residues. The interval 799–842 (TMPTENTDGEESLTSSKQQQQQSGDKHMEPLGTDDDFWGPSGPV) is disordered. Residues 835–968 (FWGPSGPVST…HFAVLENPSF (134 aa)) form a ZU5 region. Positions 835–1118 (FWGPSGPVST…LRPALPRMAS (284 aa)) constitute an FIIND domain. The interval 969–1118 (SPMGVLLRMI…LRPALPRMAS (150 aa)) is UPA. In terms of domain architecture, CARD spans 1122–1211 (DAPALLHFVD…HLIMDLLEKS (90 aa)).

The protein belongs to the NLRP family. As to quaternary structure, interacts (via LRR repeats) with BCL2 and BCL2L1 (via the loop between motifs BH4 and BH3). Interacts with NOD2; this interaction is enhanced in the presence of muramyl dipeptide (MDP) and increases IL1B release. Interacts with EIF2AK2/PKR; this interaction requires EIF2AK2 activity, is accompanied by EIF2AK2 autophosphorylation and promotes inflammasome assembly in response to danger-associated signals. Interacts with MEFV; this interaction targets Nlrp1a to degradation by autophagy, hence preventing excessive IL1B- and IL18-mediated inflammation. Interacts with DPP9; leading to inhibit activation of the inflammasome. DPP9 acts via formation of a ternary complex, composed of a DPP9 homodimer, one full-length NLRP1 protein, and one cleaved C-terminus of Nlrp1a (NACHT, LRR and PYD domains-containing protein 1a, C-terminus). Interacts with DPP8; leading to inhibit activation of the inflammasome, probably via formation of a ternary complex with DPP8. In terms of assembly, interacts with the C-terminal part of Nlrp1a (NACHT, LRR and PYD domains-containing protein 1a, C-terminus) in absence of pathogens and other damage-associated signals. Interacts with the N-terminal part of Nlrp1a (NACHT, LRR and PYD domains-containing protein 1a, N-terminus) in absence of pathogens and other damage-associated signals. Homomultimer; forms the Nlrp1a inflammasome polymeric complex, a filament composed of homopolymers of this form in response to pathogens and other damage-associated signals. The Nlrp1a inflammasome polymeric complex directly recruits pro-caspase-1 (proCASP1) independently of PYCARD/ASC. Interacts (via CARD domain) with CASP1 (via CARD domain); leading to CASP1 activation. Autocatalytically cleaved. Autocatalytic cleavage in FIIND region occurs constitutively, prior to activation signals, and is required for inflammasome activity (IL1B release), possibly by facilitating CASP1 binding. Both N- and C-terminal parts remain associated non-covalently. In terms of processing, ubiquitinated in response to pathogen-associated signals, leading to its degradation by the proteasome and subsequent release of the cleaved C-terminal part of the protein (NACHT, LRR and PYD domains-containing protein 1a, C-terminus), which polymerizes and forms the Nlrp1a inflammasome.

The protein localises to the cytoplasm. It localises to the cytosol. The protein resides in the nucleus. It is found in the inflammasome. Activated by pathogens and other damage-associated signals: activation promotes ubiquitination and degradation of the N-terminal part, releasing the cleaved C-terminal part of the protein (NACHT, LRR and PYD domains-containing protein 1a, C-terminus), which polymerizes and forms the Nlrp1a inflammasome. Nlrp1a inflammasome is inhibited by DPP8 and DPP9, which sequester the C-terminal fragment of Nlrp1a (NACHT, LRR and PYD domains-containing protein 1a, C-terminus) in a ternary complex, thereby preventing Nlrp1a oligomerization and activation. Nlrp1a inflammasome is strongly activated by Val-boroPro (Talabostat, PT-100), an inhibitor of dipeptidyl peptidases DPP8 and DPP9. Val-boroPro relieves inhibition of DPP8 and/or DPP9 by promoting disruption of the ternary complex, releasing its C-terminal part from autoinhibition. Not activated by cleavage by B.anthracis lethal toxin (LT) endopeptidase. Highly activated by Toxoplasma gondii. Acts as the sensor component of the Nlrp1a inflammasome, which mediates inflammasome activation in response to various pathogen-associated signals, leading to subsequent pyroptosis. Inflammasomes are supramolecular complexes that assemble in the cytosol in response to pathogens and other damage-associated signals and play critical roles in innate immunity and inflammation. Acts as a recognition receptor (PRR): recognizes specific pathogens and other damage-associated signals, such as Val-boroPro inhibitor, and mediates the formation of the inflammasome polymeric complex. In response to pathogen-associated signals, the N-terminal part of Nlrp1a is degraded by the proteasome, releasing the cleaved C-terminal part of the protein (NACHT, LRR and PYD domains-containing protein 1a, C-terminus), which polymerizes to initiate the formation of the inflammasome complex: the inflammasome directly recruits pro-caspase-1 (proCASP1) independently of PYCARD/ASC and promotes caspase-1 (CASP1) activation, which subsequently cleaves and activates inflammatory cytokines IL1B and IL18 and gasdermin-D (GSDMD), leading to pyroptosis. In the absence of GSDMD expression, the Nlrp1a inflammasome is able to recruit and activate CASP8, leading to activation of gasdermin-E (GSDME). In terms of biological role, constitutes the precursor of the Nlrp1a inflammasome, which mediates autoproteolytic processing within the FIIND domain to generate the N-terminal and C-terminal parts, which are associated non-covalently in absence of pathogens and other damage-associated signals. Its function is as follows. Regulatory part that prevents formation of the Nlrp1a inflammasome: in absence of pathogens and other damage-associated signals, interacts with the C-terminal part of Nlrp1a (NACHT, LRR and PYD domains-containing protein 1a, C-terminus), preventing activation of the Nlrp1a inflammasome. In response to pathogen-associated signals, this part is ubiquitinated by the N-end rule pathway and degraded by the proteasome, releasing the cleaved C-terminal part of the protein, which polymerizes and forms the Nlrp1a inflammasome. Functionally, constitutes the active part of the Nlrp1a inflammasome. In absence of pathogens and other damage-associated signals, interacts with the N-terminal part of Nlrp1a (NACHT, LRR and PYD domains-containing protein 1a, N-terminus), preventing activation of the Nlrp1a inflammasome. In response to pathogen-associated signals, the N-terminal part of Nlrp1a is degraded by the proteasome, releasing this form, which polymerizes to form the Nlrp1a inflammasome complex: the Nlrp1a inflammasome complex then directly recruits pro-caspase-1 (proCASP1) and promotes caspase-1 (CASP1) activation, leading to gasdermin-D (GSDMD) cleavage and subsequent pyroptosis. This Rattus norvegicus (Rat) protein is NACHT, LRR and PYD domains-containing protein 1a allele 5.